We begin with the raw amino-acid sequence, 441 residues long: Tryptophan aminotransferase-related protein 1 (441 aa).

Pyridoxal 5'-phosphate-binding positions include Tyr-110, Ser-152–Thr-153, Asn-219, Asp-239–Tyr-242, Thr-262–Lys-265, and Arg-273. At Lys-265 the chain carries N6-(pyridoxal phosphate)lysine.

Belongs to the alliinase family. Pyridoxal 5'-phosphate serves as cofactor. As to expression, highly expressed in anthers. Expressed at low levels in ovaries.

The catalysed reaction is L-tryptophan + 2-oxoglutarate = indole-3-pyruvate + L-glutamate. Its pathway is plant hormone metabolism; auxin biosynthesis. Its function is as follows. Probable tryptophan aminotransferase that may be involved in the regulation of auxin production in developing rice grains. The sequence is that of Tryptophan aminotransferase-related protein 1 from Oryza sativa subsp. japonica (Rice).